The sequence spans 124 residues: Ribonuclease pancreatic (124 aa).

The segment at 1–23 (RESPAMKFQRQHMDSGNSPGNNP) is disordered. K7 and R10 together coordinate substrate. Catalysis depends on H12, which acts as the Proton acceptor. Residues 14–23 (DSGNSPGNNP) show a composition bias toward polar residues. 4 cysteine pairs are disulfide-bonded: C26–C84, C40–C95, C58–C110, and C65–C72. Residues 41-45 (KPVNT) and K66 each bind substrate. N76 carries N-linked (GlcNAc...) asparagine; partial glycosylation. Residue R85 coordinates substrate. Residue H119 is the Proton donor of the active site.

It belongs to the pancreatic ribonuclease family. Monomer. Interacts with and forms tight 1:1 complexes with RNH1. Dimerization of two such complexes may occur. Interaction with RNH1 inhibits this protein. In terms of tissue distribution, pancreas.

It localises to the secreted. It catalyses the reaction an [RNA] containing cytidine + H2O = an [RNA]-3'-cytidine-3'-phosphate + a 5'-hydroxy-ribonucleotide-3'-[RNA].. It carries out the reaction an [RNA] containing uridine + H2O = an [RNA]-3'-uridine-3'-phosphate + a 5'-hydroxy-ribonucleotide-3'-[RNA].. Its function is as follows. Endonuclease that catalyzes the cleavage of RNA on the 3' side of pyrimidine nucleotides. Acts on single-stranded and double-stranded RNA. The protein is Ribonuclease pancreatic (RNASE1) of Balaenoptera acutorostrata (Common minke whale).